The primary structure comprises 88 residues: CRISPR-associated endoribonuclease Cas2 3 (88 aa).

Asp9 serves as a coordination point for Mg(2+).

It belongs to the CRISPR-associated endoribonuclease Cas2 protein family. As to quaternary structure, homodimer, forms a heterotetramer with a Cas1 homodimer. Requires Mg(2+) as cofactor.

Functionally, CRISPR (clustered regularly interspaced short palindromic repeat), is an adaptive immune system that provides protection against mobile genetic elements (viruses, transposable elements and conjugative plasmids). CRISPR clusters contain sequences complementary to antecedent mobile elements and target invading nucleic acids. CRISPR clusters are transcribed and processed into CRISPR RNA (crRNA). Functions as a ssRNA-specific endoribonuclease. Involved in the integration of spacer DNA into the CRISPR cassette. This is CRISPR-associated endoribonuclease Cas2 3 from Thermodesulfovibrio yellowstonii (strain ATCC 51303 / DSM 11347 / YP87).